The chain runs to 338 residues: Methionine synthase (338 aa).

Zn(2+)-binding residues include His-210, Cys-212, Glu-234, and Cys-294.

This sequence belongs to the archaeal MetE family. It depends on Zn(2+) as a cofactor.

The protein operates within amino-acid biosynthesis; L-methionine biosynthesis via de novo pathway. Its function is as follows. Catalyzes the transfer of a methyl group to L-homocysteine resulting in methionine formation. The physiological methyl donor is unknown. The sequence is that of Methionine synthase from Pyrococcus furiosus (strain ATCC 43587 / DSM 3638 / JCM 8422 / Vc1).